We begin with the raw amino-acid sequence, 2492 residues long: Transcriptional regulator ATRX (2492 aa).

Residues 1-147 form a disordered region; it reads MTAEPMSESK…KDDFKGPEFR (147 aa). Residue K10 forms a Glycyl lysine isopeptide (Lys-Gly) (interchain with G-Cter in SUMO2) linkage. The span at 17-27 shows a compositional bias: basic and acidic residues; sequence KLHDFLAHSSE. Phosphoserine is present on residues S25 and S34. A compositionally biased stretch (polar residues) spans 40-57; that stretch reads MNQNTDKISGSGSNSDMM. Basic and acidic residues predominate over residues 58 to 72; it reads ENSKEEGTSSSEKSK. A Phosphotyrosine modification is found at Y89. Residues S92 and S112 each carry the phosphoserine modification. The segment covering 92–108 has biased composition (acidic residues); the sequence is SDDEKPLDDETVNEDAS. The span at 135–147 shows a compositional bias: basic and acidic residues; sequence NEDKDDFKGPEFR. Glycyl lysine isopeptide (Lys-Gly) (interchain with G-Cter in SUMO2) cross-links involve residues K138 and K142. Residues 159–296 form the ADD domain; it reads KRGEDGLHGI…LEQLLQQNKK (138 aa). The GATA-type; atypical zinc-finger motif lies at 170-206; it reads SCTACGQQVNHFQKDSIYRHPSLQVLICKNCFKYYMS. S213 is subject to Phosphoserine. Residues 217–272 form a PHD-type; atypical zinc finger; the sequence is DEQCRWCAEGGNLICCDFCHNAFCKKCILRNLGRKELSTIMDENNQWYCYICHPEP. K299 is covalently cross-linked (Glycyl lysine isopeptide (Lys-Gly) (interchain with G-Cter in SUMO2)). S316 carries the post-translational modification Phosphoserine. K438 participates in a covalent cross-link: Glycyl lysine isopeptide (Lys-Gly) (interchain with G-Cter in SUMO2). The segment covering 445–502 has biased composition (basic and acidic residues); it reads KGEKPCALEKKDISKSEAKLSRKQVDSEHMHQNVPTEEQRTNKSTGGEHKKSDRKEEP. Disordered stretches follow at residues 445-516 and 535-576; these read KGEK…LDMD and AMEV…GIKS. The span at 550–567 shows a compositional bias: polar residues; the sequence is SGTEQEVESSSVKLNISS. The short motif at 581 to 594 is the PxVxL motif element; the sequence is KVTKELYVKLTPVS. T591 is modified (phosphothreonine). Positions 593-616 are disordered; it reads VSLSNSPIKGADCQEVPQDKDGYK. Phosphoserine occurs at positions 594 and 598. K623 is covalently cross-linked (Glycyl lysine isopeptide (Lys-Gly) (interchain with G-Cter in SUMO1); alternate). K623 participates in a covalent cross-link: Glycyl lysine isopeptide (Lys-Gly) (interchain with G-Cter in SUMO2); alternate. Position 634 is a phosphoserine (S634). Residues 649 to 956 form a disordered region; sequence EESDLRRSPR…KHLKTKTCKK (308 aa). T674 is modified (phosphothreonine). 4 positions are modified to phosphoserine: S675, S677, S729, and S731. Over residues 755-777 the composition is skewed to basic and acidic residues; that stretch reads NEIHTNHKTLYDLKTQAGKDDKG. Residues S784, S819, S849, S850, S875, and S876 each carry the phosphoserine modification. Over residues 843 to 864 the composition is skewed to basic and acidic residues; it reads NTKDFDSSEDEKHSKKGMDNQG. Positions 878–887 are enriched in basic and acidic residues; that stretch reads DAERKQERET. A Phosphoserine modification is found at S889. Composition is skewed to basic and acidic residues over residues 894–909 and 920–944; these read TVDKDTTIMELRDRLP and GVDKLSGKEESFTSLEVRKVAETKE. The span at 945–955 shows a compositional bias: basic residues; that stretch reads KSKHLKTKTCK. The residue at position 962 (S962) is a Phosphoserine. K967 bears the N6-acetyllysine mark. A compositionally biased stretch (basic and acidic residues) spans 968–1004; that stretch reads FLKKDQSDETSEDDKKQSKKGTEEKKKPSDFKKKVIK. The disordered stretch occupies residues 968–1479; it reads FLKKDQSDET…SKSPGKGRKK (512 aa). At S974 the chain carries Phosphoserine. At T977 the chain carries Phosphothreonine. K1004 is covalently cross-linked (Glycyl lysine isopeptide (Lys-Gly) (interchain with G-Cter in SUMO2)). A phosphoserine mark is found at S1011, S1012, and S1013. Over residues 1015-1027 the composition is skewed to basic and acidic residues; sequence GTEKLPEREEICH. The span at 1045–1055 shows a compositional bias: basic residues; sequence KSKKIRDKTSK. Positions 1056-1082 are enriched in basic and acidic residues; sequence KKDELSDYAEKSTGKGDSCDSSEDKKS. S1061 is subject to Phosphoserine. Y1063 bears the Phosphotyrosine mark. Positions 1090 to 1102 are enriched in basic residues; it reads EKKRCKLLGKSSR. The segment covering 1103–1139 has biased composition (basic and acidic residues); it reads KRQDCSSSDTEKYSMKEDGCNSSDKRLKRIELRERRN. The span at 1167-1195 shows a compositional bias: basic residues; that stretch reads KKKQRTSSKKKAVIVKEKKRNSLRTSTKR. The tract at residues 1189–1326 is interaction with DAXX; the sequence is LRTSTKRKQA…KNQVNSESDS (138 aa). Over residues 1233 to 1246 the composition is skewed to polar residues; that stretch reads LVLSSHTGFCQSSG. 3 positions are modified to phosphoserine: S1244, S1245, and S1253. Residues 1267–1281 are compositionally biased toward basic and acidic residues; sequence PENRIAKKMLLEEIK. Positions 1286 to 1297 are enriched in acidic residues; that stretch reads SDEDGSSDDEPE. The segment covering 1298–1308 has biased composition (basic and acidic residues); that stretch reads EGKKRTGKQNE. Phosphoserine occurs at positions 1322, 1324, and 1326. Positions 1334–1345 are enriched in basic residues; sequence PRYRHRLLRHKL. S1348 and S1352 each carry phosphoserine. Composition is skewed to basic and acidic residues over residues 1353-1368 and 1408-1417; these read GEEKKTKPKEHKEVKG and KKAELEENQR. The span at 1419–1428 shows a compositional bias: basic residues; sequence YKQKKKRRRI. Positions 1443 to 1468 are enriched in acidic residues; sequence EEEEEEKEEEEEEEEEEEEEEEDEND. A Glycyl lysine isopeptide (Lys-Gly) (interchain with G-Cter in SUMO2) cross-link involves residue K1488. S1527 bears the Phosphoserine mark. Phosphothreonine is present on T1529. Residues 1581 to 1768 enclose the Helicase ATP-binding domain; it reads KTKKSPGSGC…HCMVNFIKEN (188 aa). 1594–1601 contributes to the ATP binding site; that stretch reads HCMGLGKT. The DEGH box motif lies at 1719–1722; the sequence is DEGH. S1906 and S1913 each carry phosphoserine. The tract at residues 1913–2000 is disordered; the sequence is SDSDETSMSL…SSNPSSPAPD (88 aa). Residues 1929 to 1938 show a composition bias toward basic residues; it reads KKKKKGKKGK. K1982 participates in a covalent cross-link: Glycyl lysine isopeptide (Lys-Gly) (interchain with G-Cter in SUMO1); alternate. K1982 participates in a covalent cross-link: Glycyl lysine isopeptide (Lys-Gly) (interchain with G-Cter in SUMO2); alternate. A Glycyl lysine isopeptide (Lys-Gly) (interchain with G-Cter in SUMO2) cross-link involves residue K1987. Over residues 1990–1999 the composition is skewed to low complexity; sequence SSSNPSSPAP. S1992 and S1996 each carry phosphoserine. Residues 2010 to 2280 are interaction with MECP2; sequence DAEVLEHSGK…RKAAWAEYEA (271 aa). The region spanning 2025 to 2205 is the Helicase C-terminal domain; sequence EILRMAEEIG…ERHFTMNELT (181 aa). S2220 is subject to Phosphoserine. The disordered stretch occupies residues 2462 to 2492; it reads PVAGGMQPPPLQRAPPPMRSKNPGPSQGKSM. A compositionally biased stretch (pro residues) spans 2468–2479; sequence QPPPLQRAPPPM. Omega-N-methylarginine occurs at positions 2474 and 2480.

It belongs to the SNF2/RAD54 helicase family. Interacts with DAXX to form the chromatin remodeling complex ATRX:DAXX. Probably binds EZH2. Binds annexin V in a calcium and phosphatidylcholine/phosphatidylserine-dependent manner. Interacts directly with CBX5 via the PxVxL motif. Interacts with RAD50, MRE11 and NBN; indicative for an association with the MRN complex. Interacts with histone MACROH2A1. Interacts with histone H3 peptides methylated at 'Lys-10' with preferences H3K9me3 &gt; H3K9me2 &gt; H3K9me1. Interacts with histone H3 peptides unmethylated at 'Lys-5' (H3K4me0). Interacts with MECP2, SMC1 and SMC3. Interacts with SETDB1, TRIM28 and ZNF274. Phosphorylated at serine residues during mitose. Phosphorylation may promote the release from the nuclear matrix and progression to mitosis. In terms of tissue distribution, ubiquitous.

It localises to the nucleus. The protein localises to the chromosome. It is found in the telomere. The protein resides in the PML body. The enzyme catalyses ATP + H2O = ADP + phosphate + H(+). In terms of biological role, involved in transcriptional regulation and chromatin remodeling. Facilitates DNA replication in multiple cellular environments and is required for efficient replication of a subset of genomic loci. Binds to DNA tandem repeat sequences in both telomeres and euchromatin and in vitro binds DNA quadruplex structures. May help stabilizing G-rich regions into regular chromatin structures by remodeling G4 DNA and incorporating H3.3-containing nucleosomes. Catalytic component of the chromatin remodeling complex ATRX:DAXX which has ATP-dependent DNA translocase activity and catalyzes the replication-independent deposition of histone H3.3 in pericentric DNA repeats outside S-phase and telomeres, and the in vitro remodeling of H3.3-containing nucleosomes. Its heterochromatin targeting is proposed to involve a combinatorial readout of histone H3 modifications (specifically methylation states of H3K9 and H3K4) and association with CBX5. Involved in maintaining telomere structural integrity in embryonic stem cells which probably implies recruitment of CBX5 to telomeres. Reports on the involvement in transcriptional regulation of telomeric repeat-containing RNA (TERRA) are conflicting; according to a report, it is not sufficient to decrease chromatin condensation at telomeres nor to increase expression of telomeric RNA in fibroblasts. May be involved in telomere maintenance via recombination in ALT (alternative lengthening of telomeres) cell lines. Acts as a negative regulator of chromatin incorporation of transcriptionally repressive histone MACROH2A1, particularily at telomeres and the alpha-globin cluster in erythroleukemic cells. Participates in the allele-specific gene expression at the imprinted IGF2/H19 gene locus. On the maternal allele, required for the chromatin occupancy of SMC1 and CTCTF within the H19 imprinting control region (ICR) and involved in esatblishment of histone tails modifications in the ICR. May be involved in brain development and facial morphogenesis. Binds to zinc-finger coding genes with atypical chromatin signatures and regulates its H3K9me3 levels. Forms a complex with ZNF274, TRIM28 and SETDB1 to facilitate the deposition and maintenance of H3K9me3 at the 3' exons of zinc-finger genes. In Homo sapiens (Human), this protein is Transcriptional regulator ATRX (ATRX).